Reading from the N-terminus, the 528-residue chain is MEHPKRPTPKNEALHIDASGRGESSFSVHRSHSGGHEPFAPSPGSSIGASVSMFSSRNSEAEVGDAEDLDGVRTIMMNIGVPDLLADREIQMRYPEFYQFLLAEQPTWFEPAPSNGTVYRVHHTTPLPDNHKKLRKELPFEMLDLMYRFFRQKHVNSQRKRENKELLEANKQLRIAAVQMFTKAEQEEEYISNSLLKKIQQLNQDKDYLVKKYQKDEESLTKSLMANVAKIPDVHGDEAAAEKLMADKQAEIERLRTYCSRAEKSYQEELMRLRAEKVDHESALEQEQELLINTLGKRMSQMNEEKRKLQQALEMAYLNGFVDFDDTVEVALHASASQKYNGNSPNVSANSPVVNTNSPAVSTSSPLVRNTDQQSTSSYRQQLNETAHLHIENKKLVGMCNQERRRSQATEAEVKKLNQRMSKMEAVLEAIRIEAVRTDGPLAWRLAALSHDNSIDEPPHRMLAERRAHGSSPPTVVVQPSTSRAGSNSTANINNDTHPHAQVAPILATVHPTQRATPARNERPDSHY.

The segment at Met1–Val51 is disordered. Tandem repeats lie at residues Glu185–Tyr213 and Glu285–Leu313. Residues Glu185 to Leu313 are 2 X 29 AA repeats. Disordered stretches follow at residues Arg467–Thr497 and Thr509–Tyr528. Residues Ser472–Asp496 show a composition bias toward polar residues.

This is an uncharacterized protein from Caenorhabditis elegans.